A 428-amino-acid polypeptide reads, in one-letter code: Serine--tRNA ligase (428 aa).

235–237 contacts L-serine; that stretch reads TAE. ATP is bound at residue 266 to 268; that stretch reads RSE. Position 289 (glutamate 289) interacts with L-serine. 353–356 is an ATP binding site; it reads EISS. Residue serine 389 coordinates L-serine.

It belongs to the class-II aminoacyl-tRNA synthetase family. Type-1 seryl-tRNA synthetase subfamily. Homodimer. The tRNA molecule binds across the dimer.

Its subcellular location is the cytoplasm. It carries out the reaction tRNA(Ser) + L-serine + ATP = L-seryl-tRNA(Ser) + AMP + diphosphate + H(+). It catalyses the reaction tRNA(Sec) + L-serine + ATP = L-seryl-tRNA(Sec) + AMP + diphosphate + H(+). It participates in aminoacyl-tRNA biosynthesis; selenocysteinyl-tRNA(Sec) biosynthesis; L-seryl-tRNA(Sec) from L-serine and tRNA(Sec): step 1/1. Its function is as follows. Catalyzes the attachment of serine to tRNA(Ser). Is also able to aminoacylate tRNA(Sec) with serine, to form the misacylated tRNA L-seryl-tRNA(Sec), which will be further converted into selenocysteinyl-tRNA(Sec). The sequence is that of Serine--tRNA ligase from Psychromonas ingrahamii (strain DSM 17664 / CCUG 51855 / 37).